Consider the following 1356-residue polypeptide: Probable aldehyde oxidase 3 (1356 aa).

The 2Fe-2S ferredoxin-type domain occupies 10–97; that stretch reads RAVVVAVNGE…HCAVTTSEGI (88 aa). Cys49, Cys54, Cys57, and Cys79 together coordinate [2Fe-2S] cluster. The FAD-binding PCMH-type domain maps to 245-437; it reads VVVTGDGWFH…TFQTFRAAPR (193 aa). A disordered region spans residues 552–576; the sequence is NGSFTNGTANGIVDSSPEKHSNVDS.

This sequence belongs to the xanthine dehydrogenase family. Aldehyde oxidases (AO) are homodimers and heterodimers of AO subunits. The cofactor is [2Fe-2S] cluster. FAD serves as cofactor. Requires Mo-molybdopterin as cofactor.

It catalyses the reaction an aldehyde + O2 + H2O = a carboxylate + H2O2 + H(+). This Oryza sativa subsp. japonica (Rice) protein is Probable aldehyde oxidase 3.